The chain runs to 263 residues: Tryptophan synthase alpha chain (263 aa).

Catalysis depends on proton acceptor residues Glu-49 and Asp-60.

Belongs to the TrpA family. In terms of assembly, tetramer of two alpha and two beta chains.

The catalysed reaction is (1S,2R)-1-C-(indol-3-yl)glycerol 3-phosphate + L-serine = D-glyceraldehyde 3-phosphate + L-tryptophan + H2O. It participates in amino-acid biosynthesis; L-tryptophan biosynthesis; L-tryptophan from chorismate: step 5/5. Its function is as follows. The alpha subunit is responsible for the aldol cleavage of indoleglycerol phosphate to indole and glyceraldehyde 3-phosphate. This is Tryptophan synthase alpha chain from Cereibacter sphaeroides (strain ATCC 17029 / ATH 2.4.9) (Rhodobacter sphaeroides).